Here is a 121-residue protein sequence, read N- to C-terminus: Small ribosomal subunit protein uS13 (121 aa).

The segment at 95–121 (LPMRGQRTRTNARTRKGPRKAAASLKK) is disordered.

It belongs to the universal ribosomal protein uS13 family. In terms of assembly, part of the 30S ribosomal subunit. Forms a loose heterodimer with protein S19. Forms two bridges to the 50S subunit in the 70S ribosome.

Functionally, located at the top of the head of the 30S subunit, it contacts several helices of the 16S rRNA. In the 70S ribosome it contacts the 23S rRNA (bridge B1a) and protein L5 of the 50S subunit (bridge B1b), connecting the 2 subunits; these bridges are implicated in subunit movement. Contacts the tRNAs in the A and P-sites. This is Small ribosomal subunit protein uS13 from Polaromonas naphthalenivorans (strain CJ2).